We begin with the raw amino-acid sequence, 392 residues long: Integrin-linked kinase-associated serine/threonine phosphatase 2C (392 aa).

Methionine 1 bears the N-acetylmethionine mark. The disordered stretch occupies residues methionine 1–glutamate 91. The span at serine 56–valine 70 shows a compositional bias: polar residues. The segment covering threonine 72 to glutamate 91 has biased composition (basic and acidic residues). The PPM-type phosphatase domain maps to lysine 108 to isoleucine 390. Mn(2+) is bound by residues aspartate 152 and glycine 153. Residue lysine 210 is modified to N6-acetyllysine. Positions 326 and 381 each coordinate Mn(2+).

This sequence belongs to the PP2C family. As to quaternary structure, interacts with ILK. Mg(2+) is required as a cofactor. Requires Mn(2+) as cofactor.

It is found in the cytoplasm. It carries out the reaction O-phospho-L-seryl-[protein] + H2O = L-seryl-[protein] + phosphate. The enzyme catalyses O-phospho-L-threonyl-[protein] + H2O = L-threonyl-[protein] + phosphate. Its function is as follows. Protein phosphatase that may play a role in regulation of cell cycle progression via dephosphorylation of its substrates whose appropriate phosphorylation states might be crucial for cell proliferation. Selectively associates with integrin linked kinase (ILK), to modulate cell adhesion and growth factor signaling. Inhibits the ILK-GSK3B signaling axis and may play an important role in inhibiting oncogenic transformation. The polypeptide is Integrin-linked kinase-associated serine/threonine phosphatase 2C (Ilkap) (Mus musculus (Mouse)).